A 1441-amino-acid chain; its full sequence is Receptor-type tyrosine-protein phosphatase T (1441 aa).

The first 25 residues, 1 to 25, serve as a signal peptide directing secretion; the sequence is MASLAALALSLLLRLQLPPLPGARA. The Extracellular segment spans residues 26–747; that stretch reads QSAAGGCSFD…EKQVDNTVKM (722 aa). Positions 30–191 constitute an MAM domain; the sequence is GGCSFDEHYS…VRVLAHPCRK (162 aa). Asn78, Asn98, Asn137, and Asn208 each carry an N-linked (GlcNAc...) asparagine glycan. The region spanning 193-284 is the Ig-like C2-type domain; that stretch reads PHFLRLQNVE…SGVSNYAELI (92 aa). Cys213 and Cys267 are joined by a disulfide. 4 Fibronectin type-III domains span residues 291–384, 389–483, 484–590, and 591–726; these read PIAP…TKCA, GPQN…TEED, VPGA…SAPS, and MPEY…ATKG. N-linked (GlcNAc...) asparagine glycans are attached at residues Asn421, Asn510, Asn547, Asn601, Asn654, and Asn684. The chain crosses the membrane as a helical span at residues 748–768; sequence AGVIAGLLMFIIILLGVMLTI. Residues 769–1441 are Cytoplasmic-facing; that stretch reads KRRRNAYSYS…EVALEYLSSF (673 aa). The interval 790–839 is disordered; that stretch reads TQSGAQREMGPVASADKPTTKLSASRNDEGFSSSSQDVNGFTDGSRGELS. Over residues 809 to 828 the composition is skewed to polar residues; sequence TKLSASRNDEGFSSSSQDVN. 2 Tyrosine-protein phosphatase domains span residues 889-1143 and 1175-1437; these read FKEE…ILEA and IKDE…ALEY. Substrate-binding positions include Asp1052, 1084–1090, and Gln1128; that span reads CSAGAGR. The Phosphocysteine intermediate role is filled by Cys1084. Phosphoserine is present on Ser1208. Cys1378 (phosphocysteine intermediate) is an active-site residue.

This sequence belongs to the protein-tyrosine phosphatase family. Receptor class 2B subfamily. Expressed in colon, lung, heart and testis, as well as in fetal and adult brain. Not detected in muscle and peripheral blood leukocytes.

It localises to the membrane. The catalysed reaction is O-phospho-L-tyrosyl-[protein] + H2O = L-tyrosyl-[protein] + phosphate. May be involved in both signal transduction and cellular adhesion in the CNS. This is Receptor-type tyrosine-protein phosphatase T (PTPRT) from Homo sapiens (Human).